A 335-amino-acid chain; its full sequence is Nuclear transcription factor Y subunit gamma (335 aa).

Belongs to the NFYC/HAP5 subunit family. As to quaternary structure, heterotrimeric transcription factor composed of three components, NF-YA, NF-YB and NF-YC. NF-YB and NF-YC must interact and dimerize for NF-YA association and DNA binding.

The protein resides in the nucleus. Component of the sequence-specific heterotrimeric transcription factor (NF-Y) which specifically recognizes a 5'-CCAAT-3' box motif found in the promoters of its target genes. NF-Y can function as both an activator and a repressor, depending on its interacting cofactors. In Rattus norvegicus (Rat), this protein is Nuclear transcription factor Y subunit gamma (Nfyc).